The chain runs to 171 residues: uncharacterized protein (171 aa).

A helical transmembrane segment spans residues 21 to 43 (GVAASLLILLAVYTIFQSTVVIA).

The protein resides in the membrane. This is an uncharacterized protein from Archaeoglobus fulgidus (strain ATCC 49558 / DSM 4304 / JCM 9628 / NBRC 100126 / VC-16).